Reading from the N-terminus, the 181-residue chain is Oligoribonuclease (181 aa).

The 164-residue stretch at 8–171 (LIWLDMEMTG…ADILESIEEM (164 aa)) folds into the Exonuclease domain. Residue Tyr129 is part of the active site.

The protein belongs to the oligoribonuclease family.

Its subcellular location is the cytoplasm. Its function is as follows. 3'-to-5' exoribonuclease specific for small oligoribonucleotides. The polypeptide is Oligoribonuclease (Chromobacterium violaceum (strain ATCC 12472 / DSM 30191 / JCM 1249 / CCUG 213 / NBRC 12614 / NCIMB 9131 / NCTC 9757 / MK)).